The sequence spans 903 residues: Translation initiation factor IF-2 (903 aa).

The interval 66-296 (QATLKGEGPV…GRSRKREMEN (231 aa)) is disordered. Residues 121–132 (NTDETRVQEHKP) are compositionally biased toward basic and acidic residues. Composition is skewed to low complexity over residues 139–152 (AGDA…AAAG) and 178–195 (AATG…GQQS). A compositionally biased stretch (basic and acidic residues) spans 204 to 231 (EGRSRQDENKGSAREDQANRFATRDKEA). Residues 246–255 (RRPAHSKPLR) show a composition bias toward basic residues. 2 stretches are compositionally biased toward basic and acidic residues: residues 263–276 (VTKD…DRSN) and 285–296 (ESGRSRKREMEN). Residues 403–572 (ERPPVVTVMG…LLTADVAELK (170 aa)) enclose the tr-type G domain. The interval 412–419 (GHVDHGKT) is G1. 412–419 (GHVDHGKT) serves as a coordination point for GTP. The segment at 437 to 441 (GITQH) is G2. The segment at 458-461 (DTPG) is G3. GTP-binding positions include 458–462 (DTPGH) and 512–515 (NKID). The tract at residues 512-515 (NKID) is G4. The interval 548 to 550 (SAV) is G5.

This sequence belongs to the TRAFAC class translation factor GTPase superfamily. Classic translation factor GTPase family. IF-2 subfamily.

The protein localises to the cytoplasm. Functionally, one of the essential components for the initiation of protein synthesis. Protects formylmethionyl-tRNA from spontaneous hydrolysis and promotes its binding to the 30S ribosomal subunits. Also involved in the hydrolysis of GTP during the formation of the 70S ribosomal complex. The protein is Translation initiation factor IF-2 of Moorella thermoacetica (strain ATCC 39073 / JCM 9320).